The primary structure comprises 61 residues: MSSYRCPVCEYVYDESKGAPREGFPAGTPWDAVPDDWCCPDCGVREKLDFEPMPATAGSES.

The region spanning 1 to 53 (MSSYRCPVCEYVYDESKGAPREGFPAGTPWDAVPDDWCCPDCGVREKLDFEPM) is the Rubredoxin-like domain. Fe cation contacts are provided by cysteine 6, cysteine 9, cysteine 39, and cysteine 42.

The protein belongs to the rubredoxin family. Fe(3+) is required as a cofactor.

Functionally, involved in the hydrocarbon hydroxylating system, which transfers electrons from NADH to rubredoxin reductase and then through rubredoxin to alkane 1 monooxygenase. This chain is Rubredoxin 3 (rubA3), found in Rhodococcus erythropolis (Arthrobacter picolinophilus).